Here is a 533-residue protein sequence, read N- to C-terminus: MSIQIEHPAGGYKKLFETVEELSSPLTAHVTGRIPLWLTGSLLRCGPGLFEVGSEPFYHLFDGQALLHKFDFKEGHVTYHRRFIRTDAYVRAMTEKRIVITEFGTCAFPDPCKNIFSRFFSYFKGVEVTDNALVNIYPVGEDYYACTETNFITKINPETLETIKQVDLCNYISVNGATAHPHIESDGTVYNIGNCFGKNFTVAYNIIKIPPLKADKEDPINKSEVVVQFPCSDRFKPSYVHSFGLTPNYIVFVETPVKINLFKFLSSWSLWGANYMDCFESNESMGVWLHVADKKRRKYFNNKYRTSPFNLFHHINTYEDNGFLIVDLCCWKGFEFVYNYLYLANLRENWEEVKRNAMKAPQPEVRRYVLPLTIDKVDTGRNLVTLPHTTATATLRSDETIWLEPEVLFSGPRQAFEFPQINYQKFGGKPYTYAYGLGLNHFVPDKLCKMNVKTKEIWMWQEPDSYPSEPIFVSQPDALEEDDGVVLSVVVSPGAGQKPAYLLVLNAKDLSEIARAEVETNIPVTFHGLFKRS.

S2 carries the N-acetylserine modification. Residues T101 and T105 each carry the phosphothreonine modification. A lipid anchor (S-palmitoyl cysteine; in membrane form) is attached at C112. K113 carries the post-translational modification N6-acetyllysine. Phosphoserine is present on S117. Residue H180 coordinates Fe cation. The S-palmitoyl cysteine; in membrane form moiety is linked to residue C231. Fe cation-binding residues include H241 and H313. 2 S-palmitoyl cysteine; in membrane form lipidation sites follow: C329 and C330. A Fe cation-binding site is contributed by H527.

Belongs to the carotenoid oxygenase family. In terms of assembly, interacts with MYO7A; this mediates light-dependent intracellular transport of RPE65. Fe(2+) is required as a cofactor. In terms of processing, palmitoylation by LRAT regulates ligand binding specificity; the palmitoylated form (membrane form) specifically binds all-trans-retinyl-palmitate, while the soluble unpalmitoylated form binds all-trans-retinol (vitamin A). In terms of tissue distribution, retinal pigment epithelium specific.

The protein resides in the cytoplasm. Its subcellular location is the cell membrane. The protein localises to the microsome membrane. It carries out the reaction an all-trans-retinyl ester + H2O = 11-cis-retinol + a fatty acid + H(+). The catalysed reaction is lutein = (3R,3'S)-zeaxanthin. The enzyme catalyses all-trans-retinyl hexadecanoate + H2O = 11-cis-retinol + hexadecanoate + H(+). Its function is as follows. Critical isomerohydrolase in the retinoid cycle involved in regeneration of 11-cis-retinal, the chromophore of rod and cone opsins. Catalyzes the cleavage and isomerization of all-trans-retinyl fatty acid esters to 11-cis-retinol which is further oxidized by 11-cis retinol dehydrogenase to 11-cis-retinal for use as visual chromophore. Essential for the production of 11-cis retinal for both rod and cone photoreceptors. Also capable of catalyzing the isomerization of lutein to meso-zeaxanthin an eye-specific carotenoid. The soluble form binds vitamin A (all-trans-retinol), making it available for LRAT processing to all-trans-retinyl ester. The membrane form, palmitoylated by LRAT, binds all-trans-retinyl esters, making them available for IMH (isomerohydrolase) processing to all-cis-retinol. The soluble form is regenerated by transferring its palmitoyl groups onto 11-cis-retinol, a reaction catalyzed by LRAT. The protein is Retinoid isomerohydrolase (Rpe65) of Mus musculus (Mouse).